The sequence spans 200 residues: Protein Syd (200 aa).

Belongs to the Syd family.

The protein localises to the cell inner membrane. Its function is as follows. Interacts with the SecY protein in vivo. May bind preferentially to an uncomplexed state of SecY, thus functioning either as a chelating agent for excess SecY in the cell or as a regulatory factor that negatively controls the translocase function. This is Protein Syd from Colwellia psychrerythraea (strain 34H / ATCC BAA-681) (Vibrio psychroerythus).